A 285-amino-acid polypeptide reads, in one-letter code: NADPH-dependent 7-cyano-7-deazaguanine reductase (285 aa).

A substrate-binding site is contributed by 91-93 (IES). 93–94 (SK) serves as a coordination point for NADPH. Cysteine 191 acts as the Thioimide intermediate in catalysis. Aspartate 198 functions as the Proton donor in the catalytic mechanism. A substrate-binding site is contributed by 230-231 (HE). 259–260 (RG) is an NADPH binding site.

It belongs to the GTP cyclohydrolase I family. QueF type 2 subfamily. As to quaternary structure, homodimer.

The protein resides in the cytoplasm. It carries out the reaction 7-aminomethyl-7-carbaguanine + 2 NADP(+) = 7-cyano-7-deazaguanine + 2 NADPH + 3 H(+). It participates in tRNA modification; tRNA-queuosine biosynthesis. Functionally, catalyzes the NADPH-dependent reduction of 7-cyano-7-deazaguanine (preQ0) to 7-aminomethyl-7-deazaguanine (preQ1). This Legionella pneumophila (strain Corby) protein is NADPH-dependent 7-cyano-7-deazaguanine reductase.